A 289-amino-acid polypeptide reads, in one-letter code: Phosphatidylserine decarboxylase proenzyme (289 aa).

Catalysis depends on charge relay system; for autoendoproteolytic cleavage activity residues Asp89, His146, and Ser252. The Schiff-base intermediate with substrate; via pyruvic acid; for decarboxylase activity role is filled by Ser252. Ser252 is modified (pyruvic acid (Ser); by autocatalysis).

The protein belongs to the phosphatidylserine decarboxylase family. PSD-B subfamily. Prokaryotic type I sub-subfamily. As to quaternary structure, heterodimer of a large membrane-associated beta subunit and a small pyruvoyl-containing alpha subunit. It depends on pyruvate as a cofactor. Post-translationally, is synthesized initially as an inactive proenzyme. Formation of the active enzyme involves a self-maturation process in which the active site pyruvoyl group is generated from an internal serine residue via an autocatalytic post-translational modification. Two non-identical subunits are generated from the proenzyme in this reaction, and the pyruvate is formed at the N-terminus of the alpha chain, which is derived from the carboxyl end of the proenzyme. The autoendoproteolytic cleavage occurs by a canonical serine protease mechanism, in which the side chain hydroxyl group of the serine supplies its oxygen atom to form the C-terminus of the beta chain, while the remainder of the serine residue undergoes an oxidative deamination to produce ammonia and the pyruvoyl prosthetic group on the alpha chain. During this reaction, the Ser that is part of the protease active site of the proenzyme becomes the pyruvoyl prosthetic group, which constitutes an essential element of the active site of the mature decarboxylase.

The protein localises to the cell membrane. It carries out the reaction a 1,2-diacyl-sn-glycero-3-phospho-L-serine + H(+) = a 1,2-diacyl-sn-glycero-3-phosphoethanolamine + CO2. It functions in the pathway phospholipid metabolism; phosphatidylethanolamine biosynthesis; phosphatidylethanolamine from CDP-diacylglycerol: step 2/2. In terms of biological role, catalyzes the formation of phosphatidylethanolamine (PtdEtn) from phosphatidylserine (PtdSer). In Shewanella sp. (strain W3-18-1), this protein is Phosphatidylserine decarboxylase proenzyme.